A 192-amino-acid polypeptide reads, in one-letter code: NF-kappa-B inhibitor-interacting Ras-like protein 1 (192 aa).

Residues M1–I192 are small GTPase-like. G11 to T18 contributes to the GTP binding site. The Effector region motif lies at T35 to Y43. Residues D61–L65 and N120–E123 each bind GTP. Residues T169–I192 are disordered.

The protein belongs to the small GTPase superfamily. Ras family. KappaB-Ras subfamily.

The protein localises to the cytoplasm. In terms of biological role, atypical Ras-like protein that acts as a potent regulator of NF-kappa-B activity by preventing the degradation of NF-kappa-B inhibitor beta (NFKBIB) by most signals, explaining why NFKBIB is more resistant to degradation. The chain is NF-kappa-B inhibitor-interacting Ras-like protein 1 (nkiras1) from Danio rerio (Zebrafish).